The sequence spans 251 residues: HTH-type transcriptional regulator UlaR (251 aa).

Positions 3-58 (EAQRHQILLEMLAQLGFVTVEKVVERLGISPATARRDINKLDESGKLKKVRNGAEA) constitute an HTH deoR-type domain. A DNA-binding region (H-T-H motif) is located at residues 20–39 (VTVEKVVERLGISPATARRD).

Its subcellular location is the cytoplasm. Its function is as follows. Represses ulaG and the ulaABCDEF operon. This Escherichia coli O127:H6 (strain E2348/69 / EPEC) protein is HTH-type transcriptional regulator UlaR.